A 462-amino-acid polypeptide reads, in one-letter code: Argininosuccinate lyase (462 aa).

The protein belongs to the lyase 1 family. Argininosuccinate lyase subfamily.

The protein resides in the cytoplasm. It catalyses the reaction 2-(N(omega)-L-arginino)succinate = fumarate + L-arginine. It participates in amino-acid biosynthesis; L-arginine biosynthesis; L-arginine from L-ornithine and carbamoyl phosphate: step 3/3. The polypeptide is Argininosuccinate lyase (Bacillus mycoides (strain KBAB4) (Bacillus weihenstephanensis)).